We begin with the raw amino-acid sequence, 226 residues long: Neuromodulin (226 aa).

Positions 1 to 226 (MLCCMRRTKQ…EDPEADQEHA (226 aa)) are disordered. Residues Cys3 and Cys4 are each lipidated (S-palmitoyl cysteine). Positions 9–32 (KQVEKNDEDQKIEQDGVKPEDKAH) are enriched in basic and acidic residues. The region spanning 31-60 (AHKAATKIQASFRGHITRKKLKDEKKGDAP) is the IQ domain. Ser41 is subject to Phosphoserine; by PHK and PKC. Basic and acidic residues predominate over residues 51–84 (LKDEKKGDAPAAEAEAKEKDDAPVADGVEKKEGD). A compositionally biased stretch (low complexity) spans 85–97 (GSATTDAAPATSP). Phosphoserine is present on residues Ser86 and Ser96. Over residues 98–127 (KAEEPSKAGDAPSEEKKGEGDAAPSEEKAG) the composition is skewed to basic and acidic residues. Residues 128–139 (SAETESAAKATT) show a composition bias toward low complexity. A phosphoserine mark is found at Ser142, Ser144, and Ser145. The segment covering 146–158 (KAEDGPAKEEPKQ) has biased composition (basic and acidic residues). Residues 159–192 (ADVPAAVTDAAATTPAAEDAAKAAQPPTETAESS) are compositionally biased toward low complexity. Thr172 bears the Phosphothreonine mark. Phosphoserine is present on residues Ser191 and Ser192. The span at 201–214 (VDEAKPKESARQDE) shows a compositional bias: basic and acidic residues. A compositionally biased stretch (acidic residues) spans 215 to 226 (GKEDPEADQEHA).

This sequence belongs to the neuromodulin family. As to quaternary structure, identified in a complex containing FGFR4, NCAM1, CDH2, PLCG1, FRS2, SRC, SHC1, GAP43 and CTTN. Interacts (via IQ domain) with calmodulin. Binds calmodulin with a greater affinity in the absence of Ca(2+) than in its presence. In terms of processing, phosphorylated. Phosphorylation of this protein by a protein kinase C is specifically correlated with certain forms of synaptic plasticity. Palmitoylated by ZDHHC3. Palmitoylation is regulated by ARF6 and is essential for plasma membrane association and axonal and dendritic filopodia induction. Deacylated by LYPLA2. As to expression, expressed in hippocampal neurons, with highest levels of expression in the CA4 and CA3 neurons and lower levels in CA1 neurons. Expressed in the dorsal root ganglion.

The protein localises to the cell membrane. Its subcellular location is the cell projection. The protein resides in the growth cone. It localises to the growth cone membrane. It is found in the synapse. The protein localises to the filopodium membrane. Its subcellular location is the perikaryon. The protein resides in the dendrite. It localises to the axon. It is found in the cytoplasm. Its function is as follows. This protein is associated with nerve growth. It is a major component of the motile 'growth cones' that form the tips of elongating axons. Plays a role in axonal and dendritic filopodia induction. This chain is Neuromodulin (Gap43), found in Rattus norvegicus (Rat).